The following is an 836-amino-acid chain: Homeobox-leucine zipper protein ATHB-15 (836 aa).

Residues 14 to 77 constitute a DNA-binding region (homeobox); that stretch reads DNGKYVRYTP…NRRCREKQRK (64 aa). Residues 72–115 are a coiled coil; the sequence is REKQRKEASRLQAVNRKLTAMNKLLMEENDRLQKQVSQLVHENS. Residues 151–379 enclose the START domain; that stretch reads RDASPAGLLS…IAQEVTQTNS (229 aa).

The protein belongs to the HD-ZIP homeobox family. Class III subfamily. Interacts with ESR1 and ESR2. Interacts with ZPR3. Highly expressed the developing vascular elements and the adaxial portion of cotyledons. Expressed in developing ovules, stamens and carpels. Expressed in procambium and shoot meristem.

It localises to the nucleus. Functionally, probable transcription factor involved in the regulation of meristem development to promote lateral organ formation. May regulates procambial and vascular tissue formation or maintenance, and vascular development in inflorescence stems. The chain is Homeobox-leucine zipper protein ATHB-15 (ATHB-15) from Arabidopsis thaliana (Mouse-ear cress).